The sequence spans 72 residues: Translation initiation factor IF-1 (72 aa).

The S1-like domain occupies 1–72 (MSKEDMIEFS…SKGRITFRFK (72 aa)).

The protein belongs to the IF-1 family. As to quaternary structure, component of the 30S ribosomal translation pre-initiation complex which assembles on the 30S ribosome in the order IF-2 and IF-3, IF-1 and N-formylmethionyl-tRNA(fMet); mRNA recruitment can occur at any time during PIC assembly.

It localises to the cytoplasm. In terms of biological role, one of the essential components for the initiation of protein synthesis. Stabilizes the binding of IF-2 and IF-3 on the 30S subunit to which N-formylmethionyl-tRNA(fMet) subsequently binds. Helps modulate mRNA selection, yielding the 30S pre-initiation complex (PIC). Upon addition of the 50S ribosomal subunit IF-1, IF-2 and IF-3 are released leaving the mature 70S translation initiation complex. The polypeptide is Translation initiation factor IF-1 (Gluconacetobacter diazotrophicus (strain ATCC 49037 / DSM 5601 / CCUG 37298 / CIP 103539 / LMG 7603 / PAl5)).